The sequence spans 248 residues: tRNA (guanine-N(1)-)-methyltransferase (248 aa).

Residues Gly114 and 134–139 (IGDYVL) contribute to the S-adenosyl-L-methionine site.

Belongs to the RNA methyltransferase TrmD family. Homodimer.

The protein resides in the cytoplasm. It carries out the reaction guanosine(37) in tRNA + S-adenosyl-L-methionine = N(1)-methylguanosine(37) in tRNA + S-adenosyl-L-homocysteine + H(+). Specifically methylates guanosine-37 in various tRNAs. This chain is tRNA (guanine-N(1)-)-methyltransferase, found in Blochmanniella floridana.